Reading from the N-terminus, the 424-residue chain is Inhibin beta A chain (424 aa).

A signal peptide spans 1–20 (MPLLWLRGFLLASCWIIVRS). Residues 21-308 (SPTPGSEGHG…EDHPHRRRRR (288 aa)) constitute a propeptide that is removed on maturation. N165 carries N-linked (GlcNAc...) asparagine glycosylation. The segment covering 264–275 (EVDGDGKKKDGS) has biased composition (basic and acidic residues). The tract at residues 264–306 (EVDGDGKKKDGSDGGLEEEKEQSHRPFLMLQARQSEDHPHRRR) is disordered. Intrachain disulfides connect C312-C320, C319-C389, C348-C421, and C352-C423.

Belongs to the TGF-beta family. Dimeric, linked by one or more disulfide bonds. Inhibin A is a dimer of alpha/INHA and beta-A/INHBA. Activin A is a homodimer of beta-A/INHBA. Activin AB is a dimer of beta-A/INHBA and beta-B/INHBB. Interacts with FST and FSTL3; these interactions prevent activin A interaction to its type II receptor. Activin A interacts with ACVR2A. Activin A interacts with BMPR2. Inhibin A interacts with ACVR1; this interaction creates a non-signaling complex (NSC) that inhibits ACVR1-mediated BMP signaling. Inhibin A interacts with ACVR2A.

It is found in the secreted. Its function is as follows. Inhibins/activins are involved in regulating a number of diverse functions such as hypothalamic and pituitary hormone secretion, gonadal hormone secretion, germ cell development and maturation, erythroid differentiation, insulin secretion, nerve cell survival, embryonic axial development or bone growth, depending on their subunit composition. Functionally, activin A is a homodimer of INHBA that plays a role in several essential biological processes including embryonic development, stem cell maintenance and differentiation, haematopoiesis, cell proliferation and tissue fibrosis. Signals through type I (such as ACVR1B or ACVR1C) and type II receptors (such as ACVR2A, ACVR2B or BMPR2) which, upon ligand binding, phosphorylate SMAD2 and SMAD3 intracellular signaling mediators that form a complex with SMAD4, translocate to the nucleus and modulate gene expression. Can also activate alternative non-canonical intracellular signaling pathways including the p38 MAPK, extracellular signal-regulated kinases 1/2 (ERK1/2) and c-Jun N-terminal kinases (JNKs) to modulate cell migration and differentiation. Alternatively, promotes osteoblastic differentiation via ACVRL1-SMAD1/5/9 pathway. In addition, can engage the type I receptor ACVR1 to form an ACVR1-activin A-type II receptor non-signaling complex (NSC) that renders receptors unavailable for engagement with BMPs, hence resulting in an apparent inhibition of ACVR1-mediated BMP signaling. Inhibin A is a dimer of alpha/INHA and beta-A/INHBA that functions as a feedback regulator in the hypothalamic-pituitary-gonadal (HPG) axis. Inhibits the secretion of FSH from the anterior pituitary gland by acting on pituitary gonadotrope cells. Antagonizes activin A by binding to the proteoglycan, betaglycan, and forming a stable complex with and, thereby, sequestering type II activin receptors while excluding type I receptor. This is Inhibin beta A chain (Inhba) from Rattus norvegicus (Rat).